We begin with the raw amino-acid sequence, 560 residues long: Nucleoprotein (560 aa).

Residues 54 to 236 are binding site for the cap structure m7GTP; sequence LRKAKRSDAD…ITRDESAVNI (183 aa). The segment covering 323–332 has biased composition (polar residues); that stretch reads GRSWDNTSVD. Positions 323-349 are disordered; sequence GRSWDNTSVDLNPKPDPGPRAPEKNGQ. Mn(2+) contacts are provided by Asp380 and Glu382. Residues Glu390, Cys497, His500, and Cys521 each coordinate Zn(2+). Mn(2+) is bound at residue Asp525.

This sequence belongs to the arenaviridae nucleocapsid protein family. Homomultimerizes to form the nucleocapsid. Binds to viral genomic RNA. Interacts with glycoprotein G2. Interacts with protein Z; this interaction probably directs the encapsidated genome to budding sites. Interacts with protein L; this interaction does not interfere with Z-L interaction. Interacts with host IKBKE (via Protein kinase domain); the interaction inhibits IKBKE kinase activity.

Its subcellular location is the virion. It localises to the host cytoplasm. Its function is as follows. Encapsidates the genome, protecting it from nucleases. The encapsidated genomic RNA is termed the nucleocapsid (NC). Serves as template for viral transcription and replication. The increased presence of protein N in host cell does not seem to trigger the switch from transcription to replication as observed in other negative strain RNA viruses. Through the interaction with host IKBKE, strongly inhibits the phosphorylation and nuclear translocation of host IRF3, a protein involved in interferon activation pathway, leading to the inhibition of interferon-beta and IRF3-dependent promoters activation. Also encodes a functional 3'-5' exoribonuclease that degrades preferentially dsRNA substrates and thereby participates in the suppression of interferon induction. The sequence is that of Nucleoprotein from Cupixi mammarenavirus (isolate Rat/Brasil/BeAn 119303/1970) (CPXV).